The chain runs to 323 residues: Lipoyl synthase (323 aa).

The segment at 1–27 is disordered; it reads MVTILDRTSSDEKRIRHPEKAHRPDTE. Cysteine 61, cysteine 66, cysteine 72, cysteine 87, cysteine 91, cysteine 94, and serine 300 together coordinate [4Fe-4S] cluster. The 217-residue stretch at 73 to 289 folds into the Radical SAM core domain; it reads WEKKHATFMI…ETVAYAKGFL (217 aa).

Belongs to the radical SAM superfamily. Lipoyl synthase family. Requires [4Fe-4S] cluster as cofactor.

The protein resides in the cytoplasm. The enzyme catalyses [[Fe-S] cluster scaffold protein carrying a second [4Fe-4S](2+) cluster] + N(6)-octanoyl-L-lysyl-[protein] + 2 oxidized [2Fe-2S]-[ferredoxin] + 2 S-adenosyl-L-methionine + 4 H(+) = [[Fe-S] cluster scaffold protein] + N(6)-[(R)-dihydrolipoyl]-L-lysyl-[protein] + 4 Fe(3+) + 2 hydrogen sulfide + 2 5'-deoxyadenosine + 2 L-methionine + 2 reduced [2Fe-2S]-[ferredoxin]. It functions in the pathway protein modification; protein lipoylation via endogenous pathway; protein N(6)-(lipoyl)lysine from octanoyl-[acyl-carrier-protein]: step 2/2. Its function is as follows. Catalyzes the radical-mediated insertion of two sulfur atoms into the C-6 and C-8 positions of the octanoyl moiety bound to the lipoyl domains of lipoate-dependent enzymes, thereby converting the octanoylated domains into lipoylated derivatives. The polypeptide is Lipoyl synthase (Agrobacterium fabrum (strain C58 / ATCC 33970) (Agrobacterium tumefaciens (strain C58))).